The sequence spans 139 residues: Putative pre-16S rRNA nuclease (139 aa).

Belongs to the YqgF nuclease family.

The protein resides in the cytoplasm. In terms of biological role, could be a nuclease involved in processing of the 5'-end of pre-16S rRNA. The polypeptide is Putative pre-16S rRNA nuclease (Bacillus licheniformis (strain ATCC 14580 / DSM 13 / JCM 2505 / CCUG 7422 / NBRC 12200 / NCIMB 9375 / NCTC 10341 / NRRL NRS-1264 / Gibson 46)).